The following is a 129-amino-acid chain: Ribosome-binding factor A (129 aa).

This sequence belongs to the RbfA family. Monomer. Binds 30S ribosomal subunits, but not 50S ribosomal subunits or 70S ribosomes.

It localises to the cytoplasm. In terms of biological role, one of several proteins that assist in the late maturation steps of the functional core of the 30S ribosomal subunit. Associates with free 30S ribosomal subunits (but not with 30S subunits that are part of 70S ribosomes or polysomes). Required for efficient processing of 16S rRNA. May interact with the 5'-terminal helix region of 16S rRNA. The sequence is that of Ribosome-binding factor A from Ectopseudomonas mendocina (strain ymp) (Pseudomonas mendocina).